The primary structure comprises 473 residues: Putative malate dehydrogenase 1B (473 aa).

It belongs to the LDH/MDH superfamily. MDH type 2 family.

The polypeptide is Putative malate dehydrogenase 1B (MDH1B) (Bos taurus (Bovine)).